Reading from the N-terminus, the 337-residue chain is tRNA N6-adenosine threonylcarbamoyltransferase (337 aa).

Fe cation-binding residues include histidine 110 and histidine 114. Substrate contacts are provided by residues 133-137 (LVSGK), aspartate 166, glycine 179, and asparagine 271. Position 300 (aspartate 300) interacts with Fe cation.

This sequence belongs to the KAE1 / TsaD family. The cofactor is Fe(2+).

Its subcellular location is the cytoplasm. It catalyses the reaction L-threonylcarbamoyladenylate + adenosine(37) in tRNA = N(6)-L-threonylcarbamoyladenosine(37) in tRNA + AMP + H(+). Required for the formation of a threonylcarbamoyl group on adenosine at position 37 (t(6)A37) in tRNAs that read codons beginning with adenine. Is involved in the transfer of the threonylcarbamoyl moiety of threonylcarbamoyl-AMP (TC-AMP) to the N6 group of A37, together with TsaE and TsaB. TsaD likely plays a direct catalytic role in this reaction. In Buchnera aphidicola subsp. Schizaphis graminum (strain Sg), this protein is tRNA N6-adenosine threonylcarbamoyltransferase.